Reading from the N-terminus, the 144-residue chain is Large ribosomal subunit protein uL15 (144 aa).

The segment at 1-56 is disordered; it reads MELNNLKPAEGAKHAKRRVGRGIGSGLGKTAGRGHKGQKSRSGGFHKVGFEGGQMP. The segment covering 21-31 has biased composition (gly residues); sequence RGIGSGLGKTA.

The protein belongs to the universal ribosomal protein uL15 family. As to quaternary structure, part of the 50S ribosomal subunit.

Binds to the 23S rRNA. The polypeptide is Large ribosomal subunit protein uL15 (Burkholderia mallei (strain NCTC 10247)).